A 66-amino-acid chain; its full sequence is uncharacterized protein (66 aa).

Positions 5 to 59 (LKYYRALHNLTQEDLAKKLGVSRQTIIAIEKGKYDPSLKLAFKIAKFFGVKIEDI) constitute an HTH cro/C1-type domain. Residues 16-35 (QEDLAKKLGVSRQTIIAIEK) constitute a DNA-binding region (H-T-H motif).

This is an uncharacterized protein from Methanocaldococcus jannaschii (strain ATCC 43067 / DSM 2661 / JAL-1 / JCM 10045 / NBRC 100440) (Methanococcus jannaschii).